We begin with the raw amino-acid sequence, 297 residues long: Octopine catabolism/uptake operon regulatory protein OccR (297 aa).

The HTH lysR-type domain maps to 1 to 58 (MNLRQVEAFRAVMLTGQMTAAAELMLVTQPAISRLIKDFERATKLQLFERRGNHIIPT). The H-T-H motif DNA-binding region spans 18–37 (MTAAAELMLVTQPAISRLIK).

The protein belongs to the LysR transcriptional regulatory family.

In terms of biological role, positive regulatory protein for the occ operon involved in octopine catabolism and uptake. Also acts as a negative regulator of its expression. The chain is Octopine catabolism/uptake operon regulatory protein OccR (occR) from Rhizobium meliloti (Ensifer meliloti).